A 346-amino-acid polypeptide reads, in one-letter code: L-threonine 3-dehydrogenase (346 aa).

Cys42 is a binding site for Zn(2+). Residues Thr44 and His47 each act as charge relay system in the active site. Residues His67, Glu68, Cys97, Cys100, Cys103, and Cys111 each contribute to the Zn(2+) site. Residues Ile179, Asp199, Arg204, 266–268, and 291–292 each bind NAD(+); these read LSL and IT.

Belongs to the zinc-containing alcohol dehydrogenase family. In terms of assembly, homotetramer. Zn(2+) serves as cofactor.

Its subcellular location is the cytoplasm. The enzyme catalyses L-threonine + NAD(+) = (2S)-2-amino-3-oxobutanoate + NADH + H(+). Its pathway is amino-acid degradation; L-threonine degradation via oxydo-reductase pathway; glycine from L-threonine: step 1/2. Its function is as follows. Catalyzes the NAD(+)-dependent oxidation of L-threonine to 2-amino-3-ketobutyrate. The protein is L-threonine 3-dehydrogenase of Bacillus licheniformis (strain ATCC 14580 / DSM 13 / JCM 2505 / CCUG 7422 / NBRC 12200 / NCIMB 9375 / NCTC 10341 / NRRL NRS-1264 / Gibson 46).